Here is a 203-residue protein sequence, read N- to C-terminus: ADP-ribosylation factor-like protein 6-interacting protein 1 (203 aa).

The Cytoplasmic portion of the chain corresponds to 1–41 (MAEGDNRSTNLLAAETASLEEQLQGWGEVMLMADKVLRWER). Residues 42–62 (AWFPPAIMGVVSLVFLIIYYL) form a helical membrane-spanning segment. The Lumenal portion of the chain corresponds to 63-65 (DPS). A helical membrane pass occupies residues 66 to 86 (VLSGVSCFVMFLCLADYLVPI). Residues 87–133 (LAPRIFGSNKWTTEQQQRFHEICSNLVKTRRRAVGWWKRLFTLKEEK) are Cytoplasmic-facing. Residues 134-175 (PKMYFMTMIVSLAAVAWVGQQVHNLLLTYLIVTSLLLLPGLN) traverse the membrane as a helical segment. Residues 176-203 (QHGIILKYIGMAKREINKLLKQKEKKNE) lie on the Lumenal side of the membrane.

It belongs to the ARL6ip family. In terms of assembly, homooligomer. Heterodimer with ARL6IP5. Interacts with ARL6. Interacts with TMEM33. Interacts with ATL1. As to expression, expressed in all hematopoietic cell lineages, but the highest level of expression is found in early myeloid progenitor cells. Expressed in brain, bone marrow, thymus and lung. Expressed at low level in liver, kidney and spleen. Not detected in heart.

It localises to the endomembrane system. It is found in the endoplasmic reticulum membrane. The protein localises to the endoplasmic reticulum. Its function is as follows. Positively regulates SLC1A1/EAAC1-mediated glutamate transport by increasing its affinity for glutamate in a PKC activity-dependent manner. Promotes the catalytic efficiency of SLC1A1/EAAC1 probably by reducing its interaction with ARL6IP5, a negative regulator of SLC1A1/EAAC1-mediated glutamate transport. Plays a role in the formation and stabilization of endoplasmic reticulum tubules. Negatively regulates apoptosis, possibly by modulating the activity of caspase-9 (CASP9). Inhibits cleavage of CASP9-dependent substrates and downstream markers of apoptosis but not CASP9 itself. May be involved in protein transport, membrane trafficking, or cell signaling during hematopoietic maturation. This is ADP-ribosylation factor-like protein 6-interacting protein 1 (ARL6IP1) from Homo sapiens (Human).